A 333-amino-acid chain; its full sequence is Phosphoribosylformylglycinamidine cyclo-ligase (333 aa).

Belongs to the AIR synthase family.

Its subcellular location is the cytoplasm. It carries out the reaction 2-formamido-N(1)-(5-O-phospho-beta-D-ribosyl)acetamidine + ATP = 5-amino-1-(5-phospho-beta-D-ribosyl)imidazole + ADP + phosphate + H(+). It functions in the pathway purine metabolism; IMP biosynthesis via de novo pathway; 5-amino-1-(5-phospho-D-ribosyl)imidazole from N(2)-formyl-N(1)-(5-phospho-D-ribosyl)glycinamide: step 2/2. This Clostridium perfringens (strain 13 / Type A) protein is Phosphoribosylformylglycinamidine cyclo-ligase.